The primary structure comprises 400 residues: Phosphoglycerate kinase (400 aa).

Substrate is bound by residues 22-24 (DFN), Arg38, 61-64 (HLGR), Arg119, and Arg152. ATP-binding positions include Lys205, Gly296, Glu327, and 353-356 (GGDT).

Belongs to the phosphoglycerate kinase family. As to quaternary structure, monomer.

The protein localises to the cytoplasm. The catalysed reaction is (2R)-3-phosphoglycerate + ATP = (2R)-3-phospho-glyceroyl phosphate + ADP. The protein operates within carbohydrate degradation; glycolysis; pyruvate from D-glyceraldehyde 3-phosphate: step 2/5. In Campylobacter jejuni subsp. jejuni serotype O:2 (strain ATCC 700819 / NCTC 11168), this protein is Phosphoglycerate kinase.